The primary structure comprises 96 residues: MAVTRDEIQRVARLARLSLSEEEIETFAEQLNRILEHVERINRLDVADVPPTYHGVALQHPFREDKPLPSLDREAVLALAPEAEAGCYKVPKITEG.

Belongs to the GatC family. Heterotrimer of A, B and C subunits.

It carries out the reaction L-glutamyl-tRNA(Gln) + L-glutamine + ATP + H2O = L-glutaminyl-tRNA(Gln) + L-glutamate + ADP + phosphate + H(+). The enzyme catalyses L-aspartyl-tRNA(Asn) + L-glutamine + ATP + H2O = L-asparaginyl-tRNA(Asn) + L-glutamate + ADP + phosphate + 2 H(+). Its function is as follows. Allows the formation of correctly charged Asn-tRNA(Asn) or Gln-tRNA(Gln) through the transamidation of misacylated Asp-tRNA(Asn) or Glu-tRNA(Gln) in organisms which lack either or both of asparaginyl-tRNA or glutaminyl-tRNA synthetases. The reaction takes place in the presence of glutamine and ATP through an activated phospho-Asp-tRNA(Asn) or phospho-Glu-tRNA(Gln). The protein is Aspartyl/glutamyl-tRNA(Asn/Gln) amidotransferase subunit C of Symbiobacterium thermophilum (strain DSM 24528 / JCM 14929 / IAM 14863 / T).